The chain runs to 447 residues: GTPase Der (447 aa).

EngA-type G domains lie at proline 3–glutamate 167 and isoleucine 180–asparagine 353. Residues glycine 9–serine 16, aspartate 56–phenylalanine 60, asparagine 119–glutamate 122, glycine 186–serine 193, aspartate 233–leucine 237, and asparagine 298–aspartate 301 each bind GTP. A KH-like domain is found at arginine 354–serine 438.

This sequence belongs to the TRAFAC class TrmE-Era-EngA-EngB-Septin-like GTPase superfamily. EngA (Der) GTPase family. In terms of assembly, associates with the 50S ribosomal subunit.

GTPase that plays an essential role in the late steps of ribosome biogenesis. This is GTPase Der from Acidovorax ebreus (strain TPSY) (Diaphorobacter sp. (strain TPSY)).